Consider the following 294-residue polypeptide: Keratin-like protein KRT222 (294 aa).

The IF rod domain occupies 1 to 150 (MELSQLLNEI…RLLEQEEIRY (150 aa)). Residues 1–151 (MELSQLLNEI…LLEQEEIRYY (151 aa)) adopt a coiled-coil conformation.

Belongs to the intermediate filament family.

This Mus musculus (Mouse) protein is Keratin-like protein KRT222 (Krt222).